Consider the following 207-residue polypeptide: dTTP/UTP pyrophosphatase (207 aa).

Asp-79 acts as the Proton acceptor in catalysis.

The protein belongs to the Maf family. YhdE subfamily. A divalent metal cation is required as a cofactor.

It localises to the cytoplasm. The catalysed reaction is dTTP + H2O = dTMP + diphosphate + H(+). It carries out the reaction UTP + H2O = UMP + diphosphate + H(+). Its function is as follows. Nucleoside triphosphate pyrophosphatase that hydrolyzes dTTP and UTP. May have a dual role in cell division arrest and in preventing the incorporation of modified nucleotides into cellular nucleic acids. This Nitrobacter hamburgensis (strain DSM 10229 / NCIMB 13809 / X14) protein is dTTP/UTP pyrophosphatase.